Here is a 449-residue protein sequence, read N- to C-terminus: Plasmepsin IV (449 aa).

At 1 to 37 (MALTVKEEEFSNTLIKNASAFDRLKLGNLKNLKIQKK) the chain is on the cytoplasmic side. Residues 1–121 (MALTVKEEEF…SGYAQKGYLG (121 aa)) constitute a propeptide that is removed on maturation. A helical; Signal-anchor for type II membrane protein transmembrane segment spans residues 38 to 58 (LQFLYLILFVLITGVFFFFLI). Topologically, residues 59 to 449 (GNFYSHRKLY…SVGFAVAKNL (391 aa)) are lumenal. Residues 137-444 (FYGEGQIGTN…DYEKESVGFA (308 aa)) enclose the Peptidase A1 domain. Asp155 is a catalytic residue. Cysteines 168 and 173 form a disulfide. Asp335 is an active-site residue. An intrachain disulfide couples Cys370 to Cys406.

This sequence belongs to the peptidase A1 family. In terms of assembly, component of the hemozoin formation complex (HFC) composed of falcipains FP2A and/or FP2B, plasmepsins PMII, PMIII/HAP and PMIV, heme detoxifying protein HDP and falcilysin FLN. The HFC complex is involved in hemoglobin degradation and detoxification of heme in the food vacuole during the asexual blood stage. In terms of processing, proteolytically cleaved into the soluble active mature form by cysteine proteases in the digestive vacuole of trophozoites. Proteolysis requires an acidic environment. Autoprocessing or transprocessing by other plasmepsins such as PMII may serve as an alternate activation system.

It is found in the membrane. The protein localises to the vacuole lumen. The enzyme catalyses Hydrolysis of the bonds linking certain hydrophobic residues in hemoglobin or globin. Also cleaves small molecules substrates such as Ala-Leu-Glu-Arg-Thr-Phe-|-Phe(NO2)-Ser-Phe-Pro-Thr.. With respect to regulation, inhibited by KNI derived compounds KNI-10333 and to a lesser extent KNI-10743. In terms of biological role, during the asexual blood stage, catalyzes the cleavage of denatured host hemoglobin (Hb). Digestion of host Hb is an essential step which provides the parasite with amino acids for protein synthesis, and regulates osmolarity. The polypeptide is Plasmepsin IV (Plasmodium falciparum (isolate 3D7)).